The chain runs to 252 residues: MSHRRDYGSDAVHVRITHDPPPENCFPNSGDSSVWATEDDYSRVWAINSDGAESPSKKTRSSSSSEIGKSFFKTKLCFKFRAGTCPYSASSCHFAHSAEELRLPPPPPPNWQETVTEASRNRESFAVSLGPRGNVAQTLKSPNWKTRICNKWQTTGYCPFGSHCHFAHGPSELHTFGGGLVEGECKIGTSATLDTKQRGQVDTVTSLVSPGVSSQRTSSAVTQKPNGVRTQRKWKGPDKISRVYGDWIDDIE.

The span at 1-21 shows a compositional bias: basic and acidic residues; sequence MSHRRDYGSDAVHVRITHDPP. Positions 1-31 are disordered; that stretch reads MSHRRDYGSDAVHVRITHDPPPENCFPNSGD. 2 consecutive C3H1-type zinc fingers follow at residues 71–99 and 143–171; these read FFKT…HSAE and NWKT…HGPS.

This Arabidopsis thaliana (Mouse-ear cress) protein is Zinc finger CCCH domain-containing protein 28.